Here is a 248-residue protein sequence, read N- to C-terminus: tRNA pseudouridine synthase A 2 (248 aa).

The active-site Nucleophile is the Asp-55. Tyr-113 provides a ligand contact to substrate.

This sequence belongs to the tRNA pseudouridine synthase TruA family. As to quaternary structure, homodimer.

It catalyses the reaction uridine(38/39/40) in tRNA = pseudouridine(38/39/40) in tRNA. Formation of pseudouridine at positions 38, 39 and 40 in the anticodon stem and loop of transfer RNAs. This Clostridium tetani (strain Massachusetts / E88) protein is tRNA pseudouridine synthase A 2.